Consider the following 445-residue polypeptide: MKNIIRTPETHPLTWRLRDDKQPVWLDEYRSKNGYEGARKALTGLSPDEIVNQVKDAGLKGRGGAGFSTGLKWSLMPKDESMNIRYLLCNADEMEPGTYKDRLLMEQLPHLLVEGMLISAFALKAYRGYIFLRGEYIEAAVNLRRAIAEATEAGLLGKNIMGTGFDFELFVHTGAGRYICGEETALINSLEGRRANPRSKPPFPATSGAWGKPTCVNNVETLCNVPAILANGVEWYQNISKSKDAGTKLMGFSGRVKNPGLWELPFGTTAREILEDYAGGMRDGLKFKAWQPGGAGTDFLTEAHLDLPMEFESIGKAGSRLGTALAMAVDHEINMVSLVRNLEEFFARESCGWCTPCRDGLPWSVKILRALERGEGQPGDIETLEQLCRFLGPGKTFCAHAPGAVEPLQSAIKYFREEFEAGIKQPFSNTHLINGIQPNLLKERW.

61–70 (GRGGAGFSTG) is an NAD(+) binding site. 174 to 221 (GAGRYICGEETALINSLEGRRANPRSKPPFPATSGAWGKPTCVNNVET) is a binding site for FMN. Positions 351, 354, 357, and 398 each coordinate [4Fe-4S] cluster.

The protein belongs to the complex I 51 kDa subunit family. As to quaternary structure, composed of 13 different subunits. Subunits NuoCD, E, F, and G constitute the peripheral sector of the complex. Requires FMN as cofactor. The cofactor is [4Fe-4S] cluster.

It catalyses the reaction a quinone + NADH + 5 H(+)(in) = a quinol + NAD(+) + 4 H(+)(out). Functionally, NDH-1 shuttles electrons from NADH, via FMN and iron-sulfur (Fe-S) centers, to quinones in the respiratory chain. The immediate electron acceptor for the enzyme in this species is believed to be ubiquinone. Couples the redox reaction to proton translocation (for every two electrons transferred, four hydrogen ions are translocated across the cytoplasmic membrane), and thus conserves the redox energy in a proton gradient. The protein is NADH-quinone oxidoreductase subunit F (nuoF) of Escherichia coli (strain K12).